The primary structure comprises 499 residues: Glycerol kinase (499 aa).

Threonine 17 lines the ADP pocket. ATP-binding residues include threonine 17, threonine 18, and serine 19. Sn-glycerol 3-phosphate is bound at residue threonine 17. Residue arginine 21 coordinates ADP. Sn-glycerol 3-phosphate-binding residues include arginine 87, glutamate 88, tyrosine 139, and aspartate 243. Positions 87, 88, 139, 243, and 244 each coordinate glycerol. Threonine 265 and glycine 308 together coordinate ADP. Residues threonine 265, glycine 308, glutamine 312, and glycine 409 each coordinate ATP. ADP contacts are provided by glycine 409 and asparagine 413.

Belongs to the FGGY kinase family.

It carries out the reaction glycerol + ATP = sn-glycerol 3-phosphate + ADP + H(+). Its pathway is polyol metabolism; glycerol degradation via glycerol kinase pathway; sn-glycerol 3-phosphate from glycerol: step 1/1. Inhibited by fructose 1,6-bisphosphate (FBP). In terms of biological role, key enzyme in the regulation of glycerol uptake and metabolism. Catalyzes the phosphorylation of glycerol to yield sn-glycerol 3-phosphate. This is Glycerol kinase from Pseudomonas putida (strain GB-1).